The primary structure comprises 227 residues: MAHAAQVGLQDATSPIMEELIIFHDHALMIIFLICFLVLYALFLTLTTKLTNTSISDAQEMETVWTILPAIILVLIALPSLRILYMTDEVNDPSFTIKSIGHQWYWTYEYTDYGGLIFNSYMLPPLFLEPGDLRLLDVDNRLVLPVEAPVRMMITSQDVLHSWAVPTLGLKTDAIPGRLNQTTFTATRPGVYYGQCSEICGANHSFMPIVLELIPLKIFEMGPVFTL.

Residues 1 to 14 lie on the Mitochondrial intermembrane side of the membrane; it reads MAHAAQVGLQDATS. Residues 15–45 form a helical membrane-spanning segment; sequence PIMEELIIFHDHALMIIFLICFLVLYALFLT. Residues 46 to 59 are Mitochondrial matrix-facing; sequence LTTKLTNTSISDAQ. The chain crosses the membrane as a helical span at residues 60-87; it reads EMETVWTILPAIILVLIALPSLRILYMT. Topologically, residues 88–227 are mitochondrial intermembrane; that stretch reads DEVNDPSFTI…IFEMGPVFTL (140 aa). Positions 161, 196, 198, 200, 204, and 207 each coordinate Cu cation. Position 198 (Glu198) interacts with Mg(2+).

Belongs to the cytochrome c oxidase subunit 2 family. As to quaternary structure, component of the cytochrome c oxidase (complex IV, CIV), a multisubunit enzyme composed of 14 subunits. The complex is composed of a catalytic core of 3 subunits MT-CO1, MT-CO2 and MT-CO3, encoded in the mitochondrial DNA, and 11 supernumerary subunits COX4I, COX5A, COX5B, COX6A, COX6B, COX6C, COX7A, COX7B, COX7C, COX8 and NDUFA4, which are encoded in the nuclear genome. The complex exists as a monomer or a dimer and forms supercomplexes (SCs) in the inner mitochondrial membrane with NADH-ubiquinone oxidoreductase (complex I, CI) and ubiquinol-cytochrome c oxidoreductase (cytochrome b-c1 complex, complex III, CIII), resulting in different assemblies (supercomplex SCI(1)III(2)IV(1) and megacomplex MCI(2)III(2)IV(2)). Found in a complex with TMEM177, COA6, COX18, COX20, SCO1 and SCO2. Interacts with TMEM177 in a COX20-dependent manner. Interacts with COX20. Interacts with COX16. Requires Cu cation as cofactor.

Its subcellular location is the mitochondrion inner membrane. It catalyses the reaction 4 Fe(II)-[cytochrome c] + O2 + 8 H(+)(in) = 4 Fe(III)-[cytochrome c] + 2 H2O + 4 H(+)(out). Component of the cytochrome c oxidase, the last enzyme in the mitochondrial electron transport chain which drives oxidative phosphorylation. The respiratory chain contains 3 multisubunit complexes succinate dehydrogenase (complex II, CII), ubiquinol-cytochrome c oxidoreductase (cytochrome b-c1 complex, complex III, CIII) and cytochrome c oxidase (complex IV, CIV), that cooperate to transfer electrons derived from NADH and succinate to molecular oxygen, creating an electrochemical gradient over the inner membrane that drives transmembrane transport and the ATP synthase. Cytochrome c oxidase is the component of the respiratory chain that catalyzes the reduction of oxygen to water. Electrons originating from reduced cytochrome c in the intermembrane space (IMS) are transferred via the dinuclear copper A center (CU(A)) of subunit 2 and heme A of subunit 1 to the active site in subunit 1, a binuclear center (BNC) formed by heme A3 and copper B (CU(B)). The BNC reduces molecular oxygen to 2 water molecules using 4 electrons from cytochrome c in the IMS and 4 protons from the mitochondrial matrix. The protein is Cytochrome c oxidase subunit 2 (MT-CO2) of Pan paniscus (Pygmy chimpanzee).